The primary structure comprises 130 residues: Small ribosomal subunit protein uS8 (130 aa).

This sequence belongs to the universal ribosomal protein uS8 family. In terms of assembly, part of the 30S ribosomal subunit. Contacts proteins S5 and S12.

Functionally, one of the primary rRNA binding proteins, it binds directly to 16S rRNA central domain where it helps coordinate assembly of the platform of the 30S subunit. The polypeptide is Small ribosomal subunit protein uS8 (Shewanella piezotolerans (strain WP3 / JCM 13877)).